The chain runs to 207 residues: MTRSPAPSSPTHPRRLGLTGSIGAGKSTVARLLRERGLTVLDADAEARWVTEQPEVLTELNEAFPGVVTGGTLDRAGLAARVFSDPAQVARLNAITHPRVRARMEALEAAATARGEHWVVQDIPLLFEGGLERGMDAVLVVDAPLELRLERALARGGLTREDILARDARQLSSEEKRRRATIVLDNSGPLEALEGQLDAALRQLEIT.

Polar residues predominate over residues 1–11 (MTRSPAPSSPT). The disordered stretch occupies residues 1 to 21 (MTRSPAPSSPTHPRRLGLTGS). Positions 15-207 (RLGLTGSIGA…DAALRQLEIT (193 aa)) constitute a DPCK domain. 23 to 28 (GAGKST) contacts ATP.

The protein belongs to the CoaE family.

It localises to the cytoplasm. The enzyme catalyses 3'-dephospho-CoA + ATP = ADP + CoA + H(+). The protein operates within cofactor biosynthesis; coenzyme A biosynthesis; CoA from (R)-pantothenate: step 5/5. Catalyzes the phosphorylation of the 3'-hydroxyl group of dephosphocoenzyme A to form coenzyme A. The polypeptide is Dephospho-CoA kinase (Deinococcus radiodurans (strain ATCC 13939 / DSM 20539 / JCM 16871 / CCUG 27074 / LMG 4051 / NBRC 15346 / NCIMB 9279 / VKM B-1422 / R1)).